Here is a 112-residue protein sequence, read N- to C-terminus: uncharacterized protein (112 aa).

The protein localises to the plastid. The protein resides in the chloroplast. This is an uncharacterized protein from Chlamydomonas reinhardtii (Chlamydomonas smithii).